The chain runs to 105 residues: Small ribosomal subunit protein eS26 (105 aa).

The protein belongs to the eukaryotic ribosomal protein eS26 family. In terms of assembly, component of the small ribosomal subunit.

The protein localises to the cytoplasm. In Encephalitozoon cuniculi (strain GB-M1) (Microsporidian parasite), this protein is Small ribosomal subunit protein eS26 (RPS26).